Here is a 238-residue protein sequence, read N- to C-terminus: Probable septum site-determining protein MinC (238 aa).

The protein belongs to the MinC family. Interacts with MinD and FtsZ.

Its function is as follows. Cell division inhibitor that blocks the formation of polar Z ring septums. Rapidly oscillates between the poles of the cell to destabilize FtsZ filaments that have formed before they mature into polar Z rings. Prevents FtsZ polymerization. This is Probable septum site-determining protein MinC from Xylella fastidiosa (strain M12).